Reading from the N-terminus, the 449-residue chain is Tryptophan synthase beta chain 2 (449 aa).

Lys116 bears the N6-(pyridoxal phosphate)lysine mark.

The protein belongs to the TrpB family. Tetramer of two alpha and two beta chains. Pyridoxal 5'-phosphate serves as cofactor.

The enzyme catalyses (1S,2R)-1-C-(indol-3-yl)glycerol 3-phosphate + L-serine = D-glyceraldehyde 3-phosphate + L-tryptophan + H2O. The protein operates within amino-acid biosynthesis; L-tryptophan biosynthesis; L-tryptophan from chorismate: step 5/5. Functionally, the beta subunit is responsible for the synthesis of L-tryptophan from indole and L-serine. The chain is Tryptophan synthase beta chain 2 (trpB2) from Aeropyrum pernix (strain ATCC 700893 / DSM 11879 / JCM 9820 / NBRC 100138 / K1).